The chain runs to 123 residues: uncharacterized protein (123 aa).

Over residues 31–57 (KLRTEAKKSKDKERTKEKEKHESLAKE) the composition is skewed to basic and acidic residues. Residues 31–58 (KLRTEAKKSKDKERTKEKEKHESLAKEK) are disordered. Residues 91–111 (IIIFLLILLVSGLMVGIFFGI) traverse the membrane as a helical segment.

Its subcellular location is the membrane. This is an uncharacterized protein from Mycoplasma genitalium (strain ATCC 33530 / DSM 19775 / NCTC 10195 / G37) (Mycoplasmoides genitalium).